A 554-amino-acid polypeptide reads, in one-letter code: Urocanate hydratase (554 aa).

NAD(+) is bound by residues 49–50 (GG), Q127, 173–175 (GMG), E193, R198, 239–240 (NA), 260–264 (QTSAH), 270–271 (YI), and Y319. Residue C407 is part of the active site. G489 lines the NAD(+) pocket.

It belongs to the urocanase family. NAD(+) is required as a cofactor.

The protein localises to the cytoplasm. The catalysed reaction is 4-imidazolone-5-propanoate = trans-urocanate + H2O. It functions in the pathway amino-acid degradation; L-histidine degradation into L-glutamate; N-formimidoyl-L-glutamate from L-histidine: step 2/3. Its function is as follows. Catalyzes the conversion of urocanate to 4-imidazolone-5-propionate. In Bacillus velezensis (strain DSM 23117 / BGSC 10A6 / LMG 26770 / FZB42) (Bacillus amyloliquefaciens subsp. plantarum), this protein is Urocanate hydratase.